The chain runs to 439 residues: Chromosomal replication initiator protein DnaA (439 aa).

The interval 1-75 (MESWSRCLER…GIREVVLAIG (75 aa)) is domain I, interacts with DnaA modulators. Residues 75-101 (GSRPKTTELTVPVDTTGRLSQTVPFNG) form a domain II region. The segment at 102–319 (NLDTHYNFDN…GALNTLVARA (218 aa)) is domain III, AAA+ region. ATP is bound by residues Gly147, Gly149, Lys150, and Thr151. The segment at 320–439 (NFTGRAVTIE…WDKLMRKFSE (120 aa)) is domain IV, binds dsDNA.

The protein belongs to the DnaA family. In terms of assembly, oligomerizes as a right-handed, spiral filament on DNA at oriC.

It is found in the cytoplasm. Plays an essential role in the initiation and regulation of chromosomal replication. ATP-DnaA binds to the origin of replication (oriC) to initiate formation of the DNA replication initiation complex once per cell cycle. Binds the DnaA box (a 9 base pair repeat at the origin) and separates the double-stranded (ds)DNA. Forms a right-handed helical filament on oriC DNA; dsDNA binds to the exterior of the filament while single-stranded (ss)DNA is stabiized in the filament's interior. The ATP-DnaA-oriC complex binds and stabilizes one strand of the AT-rich DNA unwinding element (DUE), permitting loading of DNA polymerase. After initiation quickly degrades to an ADP-DnaA complex that is not apt for DNA replication. Binds acidic phospholipids. The chain is Chromosomal replication initiator protein DnaA from Xylella fastidiosa (strain Temecula1 / ATCC 700964).